We begin with the raw amino-acid sequence, 812 residues long: Plasminogen (812 aa).

The N-terminal stretch at 1–19 is a signal peptide; that stretch reads MDHKEVILLFLLLLKPGQG. Positions 20-98 constitute a PAN domain; that stretch reads DSLDGYISTQ…RDVILFEKRV (79 aa). Intrachain disulfides connect cysteine 49–cysteine 73, cysteine 53–cysteine 61, cysteine 103–cysteine 181, cysteine 124–cysteine 164, cysteine 152–cysteine 176, cysteine 185–cysteine 262, cysteine 188–cysteine 316, cysteine 206–cysteine 245, cysteine 234–cysteine 257, cysteine 275–cysteine 352, cysteine 296–cysteine 335, cysteine 324–cysteine 347, cysteine 377–cysteine 454, cysteine 398–cysteine 437, cysteine 426–cysteine 449, cysteine 481–cysteine 560, cysteine 502–cysteine 543, cysteine 531–cysteine 555, cysteine 568–cysteine 687, cysteine 578–cysteine 586, and cysteine 609–cysteine 625. Kringle domains lie at 103–181, 184–262, 275–352, 377–454, and 481–560; these read CKTG…IPEC, ECMY…IPRC, CLKG…IPSC, CYQS…LKRC, and CMYG…IPLC. Residues 582–810 form the Peptidase S1 domain; it reads VVGGCVANPH…FVDWIEREMR (229 aa). Serine 598 bears the Phosphoserine mark. Residues histidine 624 and aspartate 667 each act as charge relay system in the active site. The residue at position 690 (serine 690) is a Phosphoserine. 3 disulfide bridges follow: cysteine 701/cysteine 768, cysteine 731/cysteine 747, and cysteine 758/cysteine 786. The active-site Charge relay system is the serine 762.

This sequence belongs to the peptidase S1 family. Plasminogen subfamily. In terms of assembly, interacts (both mature PLG and the angiostatin peptide) with AMOT and CSPG4. Interacts (via the Kringle domains) with HRG; the interaction tethers PLG to the cell surface and enhances its activation. Interacts (via Kringle 4 domain) with ADA; the interaction stimulates PLG activation when in complex with DPP4. Angiostatin: Interacts with ATP5F1A; the interaction inhibits most of the angiogenic effects of angiostatin. In terms of processing, in the presence of the inhibitor, the activation involves only cleavage after Arg-581, yielding two chains held together by two disulfide bonds. In the absence of the inhibitor, the activation involves additionally the removal of the activation peptide.

It localises to the secreted. The enzyme catalyses Preferential cleavage: Lys-|-Xaa &gt; Arg-|-Xaa, higher selectivity than trypsin. Converts fibrin into soluble products.. With respect to regulation, converted into plasmin by plasminogen activators, both plasminogen and its activator being bound to fibrin. Cannot be activated with streptokinase. Its function is as follows. Plasmin dissolves the fibrin of blood clots and acts as a proteolytic factor in a variety of other processes including embryonic development, tissue remodeling, tumor invasion, and inflammation. In ovulation, weakens the walls of the Graafian follicle. It activates the urokinase-type plasminogen activator, collagenases and several complement zymogens, such as C1, C4 and C5. Cleavage of fibronectin and laminin leads to cell detachment and apoptosis. Also cleaves fibrin, thrombospondin and von Willebrand factor. Its role in tissue remodeling and tumor invasion may be modulated by CSPG4. Binds to cells. Functionally, angiostatin is an angiogenesis inhibitor that blocks neovascularization and growth of experimental primary and metastatic tumors in vivo. The sequence is that of Plasminogen (Plg) from Mus musculus (Mouse).